A 259-amino-acid chain; its full sequence is Sphinganine C4-monooxygenase 2 (259 aa).

Helical transmembrane passes span 10–30, 54–74, and 91–111; these read FLGT…YICL, AVVK…VILF, and ILLL…WQYF. The region spanning 98–234 is the Fatty acid hydroxylase domain; sequence FIIAMLVIDT…FVMWDRILGT (137 aa). The Histidine box-1 motif lies at 113–117; sequence HRYMH. Residues 127–131 carry the Histidine box-2 motif; sequence HSQHH. Residues 206 to 212 carry the Histidine box-3 motif; sequence YHDVHHQ.

This sequence belongs to the sterol desaturase family. The cofactor is Fe cation. Ubiquitous, with higher levels in flowers and roots.

It localises to the endoplasmic reticulum membrane. It carries out the reaction a dihydroceramide + 2 Fe(II)-[cytochrome b5] + O2 + 2 H(+) = a phytoceramide + 2 Fe(III)-[cytochrome b5] + H2O. It participates in membrane lipid metabolism; sphingolipid biosynthesis. Its function is as follows. Involved in sphingolipid trihydroxy long-chain base (4-hydroxysphinganine) biosynthesis. Can use C18- and C20-sphinganine as substrates to produce C18- and C20-phytosphinganines (D-ribo-2-amino-1,3,4-trihydroxyoctadecane and -eicosane). The chain is Sphinganine C4-monooxygenase 2 (SBH2) from Arabidopsis thaliana (Mouse-ear cress).